We begin with the raw amino-acid sequence, 81 residues long: ATP synthase subunit C, plastid (81 aa).

The next 2 membrane-spanning stretches (helical) occupy residues 3-23 (PLIPAASVIAAGLAVGLASIG) and 61-81 (EALTIYGLVVALALSFANPFI).

This sequence belongs to the ATPase C chain family. F-type ATPases have 2 components, F(1) - the catalytic core - and F(0) - the membrane proton channel. F(1) has five subunits: alpha(3), beta(3), gamma(1), delta(1), epsilon(1). F(0) has four main subunits: a(1), b(1), b'(1) and c(10-14). The alpha and beta chains form an alternating ring which encloses part of the gamma chain. F(1) is attached to F(0) by a central stalk formed by the gamma and epsilon chains, while a peripheral stalk is formed by the delta, b and b' chains.

The protein resides in the plastid membrane. In terms of biological role, f(1)F(0) ATP synthase produces ATP from ADP in the presence of a proton or sodium gradient. F-type ATPases consist of two structural domains, F(1) containing the extramembraneous catalytic core and F(0) containing the membrane proton channel, linked together by a central stalk and a peripheral stalk. During catalysis, ATP synthesis in the catalytic domain of F(1) is coupled via a rotary mechanism of the central stalk subunits to proton translocation. Functionally, key component of the F(0) channel; it plays a direct role in translocation across the membrane. A homomeric c-ring of between 10-14 subunits forms the central stalk rotor element with the F(1) delta and epsilon subunits. The polypeptide is ATP synthase subunit C, plastid (Aneura mirabilis (Parasitic liverwort)).